We begin with the raw amino-acid sequence, 851 residues long: M-phase phosphoprotein 8 (851 aa).

The disordered stretch occupies residues 21–54 (NIGRSPEVEGGGAAGEEKDAATKGTVAVGDSEED). Phosphoserine occurs at positions 51, 85, and 136. One can recognise a Chromo domain in the interval 59-118 (FEVERILDMKCEGGKNLYKVRWKGYTSDDDTWEPEVHLEDCKEVLLEFRKKVAENKAKAV). The interval 80 to 87 (WKGYTSDD) is histone H3K9me3 binding. Positions 133–174 (EADSDIDQQGDTKEDTSPRKKKKKIKYKEDKSPDDLRKKRAK) are disordered. Residue T144 is modified to Phosphothreonine. Residues S149 and S164 each carry the phosphoserine; by CDK1 modification. Positions 159–169 (YKEDKSPDDLR) are enriched in basic and acidic residues. S188, S263, S267, and S274 each carry phosphoserine. Residues 240–302 (REDVKDNRKT…KTGQDTVQES (63 aa)) form a disordered region. Positions 269-278 (TLEDESEDFL) are enriched in acidic residues. The span at 279 to 295 (SDNKEKQNVRTAKDKTG) shows a compositional bias: basic and acidic residues. S313 is modified (phosphoserine). The tract at residues 315–428 (EEAGTRVRRK…DKEEKARKEP (114 aa)) is disordered. Positions 329 to 364 (RKFEEPKEIKKLENTNNFLERKMIPKKQRNQDKGRS) are enriched in basic and acidic residues. T379 carries the post-translational modification Phosphothreonine; by CDK1. A phosphoserine mark is found at S386 and S394. A compositionally biased stretch (basic and acidic residues) spans 401–428 (EKERKNEPKEKYQKRYDFDKEEKARKEP). Position 447 is a phosphothreonine (T447). 4 ANK repeats span residues 591–620 (TGMT…KVNG), 624–653 (NGTT…FVNV), 657–686 (NGET…DCNI), and 690–719 (HQNS…TLSR).

Homodimer. Interacts (via chromo domain) with histone H3K9me3. Has the highest affinity for H3K9me3, and lesser affinity for H3K9me2 and H3K9me1. Component of the HUSH complex; at least composed of TASOR, PPHLN1 and MPHOSPH8. Interacts with DNMT3, EHMT1 and SETDB1. Interacts with MORC2; the interaction associateS MORC2 with the HUSH complex which recruits MORC2 to heterochromatic loci. Interacts with ZNF638; leading to recruitment of the HUSH complex to unintegrated retroviral DNA. Interacts with TASOR. In terms of processing, phosphorylated in M (mitotic) phase. Phosphorylation by CDK1 promotes dissociation from chromatin.

The protein resides in the nucleus. The protein localises to the chromosome. In terms of biological role, heterochromatin component that specifically recognizes and binds methylated 'Lys-9' of histone H3 (H3K9me) and promotes recruitment of proteins that mediate epigenetic repression. Mediates recruitment of the HUSH complex to H3K9me3 sites: the HUSH complex is recruited to genomic loci rich in H3K9me3 and is required to maintain transcriptional silencing by promoting recruitment of SETDB1, a histone methyltransferase that mediates further deposition of H3K9me3, as well as MORC2. Binds H3K9me and promotes DNA methylation by recruiting DNMT3A to target CpG sites; these can be situated within the coding region of the gene. Mediates down-regulation of CDH1 expression. Also represses L1 retrotransposons in collaboration with MORC2 and, probably, SETDB1, the silencing is dependent of repressive epigenetic modifications, such as H3K9me3 mark. Silencing events often occur within introns of transcriptionally active genes, and lead to the down-regulation of host gene expression. The HUSH complex is also involved in the silencing of unintegrated retroviral DNA by being recruited by ZNF638: some part of the retroviral DNA formed immediately after infection remains unintegrated in the host genome and is transcriptionally repressed. The sequence is that of M-phase phosphoprotein 8 from Rattus norvegicus (Rat).